The primary structure comprises 215 residues: Abscisic acid receptor PYL6 (215 aa).

The interval 54–209 (HVVGPSQCFS…NLQSLAKLAE (156 aa)) is START-like. The cysteines at positions 61 and 190 are disulfide-linked. Abscisate is bound by residues Lys90, 120–125 (AAFSLE), 147–153 (RLMNYKS), and Glu174. The Gate loop motif lies at 116–120 (SGLPA). A Latch loop motif is present at residues 146-148 (HRL).

The protein belongs to the PYR/PYL/RCAR abscisic acid intracellular receptor family. As to quaternary structure, monomer. Homodimer. Binds ABA on one subunit only. Interacts with HAB1, ABI1 and ABI2, and possibly with other PP2Cs. Binds to CARs protein in an ABA-independent manner, both at the plasma membrane and in the nucleus. Interacts directly with CAR1 and CAR4. Interacts with MYC2 in the nucleus. Interaction with MYC2 is increased in the presence of abscisic acid.

Its subcellular location is the cytoplasm. It localises to the nucleus. The protein resides in the cell membrane. Receptor for abscisic acid (ABA) required for ABA-mediated responses such as stomatal closure and germination inhibition. Inhibits the activity of group-A protein phosphatases type 2C (PP2Cs) in an ABA-independent manner but more efficiently when activated by ABA. Can be activated by both (-)-ABA and (+)-ABA. May link ABA and jasmonate signaling pathways by modifying MYC2 transcriptional activity, and regulation of JAZ6 and JAZ8 gene expression by MYC2. The protein is Abscisic acid receptor PYL6 (PYL6) of Arabidopsis thaliana (Mouse-ear cress).